The following is a 571-amino-acid chain: Chaperonin GroEL 1 (571 aa).

Residues 29–32, lysine 50, 86–90, glycine 416, and aspartate 498 contribute to the ATP site; these read TLGP and DGTTT.

Belongs to the chaperonin (HSP60) family. As to quaternary structure, forms a cylinder of 14 subunits composed of two heptameric rings stacked back-to-back. Interacts with the co-chaperonin GroES.

The protein localises to the cytoplasm. It catalyses the reaction ATP + H2O + a folded polypeptide = ADP + phosphate + an unfolded polypeptide.. In terms of biological role, together with its co-chaperonin GroES, plays an essential role in assisting protein folding. The GroEL-GroES system forms a nano-cage that allows encapsulation of the non-native substrate proteins and provides a physical environment optimized to promote and accelerate protein folding. This is Chaperonin GroEL 1 from Rhodopirellula baltica (strain DSM 10527 / NCIMB 13988 / SH1).